A 219-amino-acid polypeptide reads, in one-letter code: ATP-dependent Clp protease proteolytic subunit 1 (219 aa).

S113 functions as the Nucleophile in the catalytic mechanism. Residue H138 is part of the active site.

The protein belongs to the peptidase S14 family. As to quaternary structure, fourteen ClpP subunits assemble into 2 heptameric rings which stack back to back to give a disk-like structure with a central cavity, resembling the structure of eukaryotic proteasomes.

The protein resides in the cytoplasm. The enzyme catalyses Hydrolysis of proteins to small peptides in the presence of ATP and magnesium. alpha-casein is the usual test substrate. In the absence of ATP, only oligopeptides shorter than five residues are hydrolyzed (such as succinyl-Leu-Tyr-|-NHMec, and Leu-Tyr-Leu-|-Tyr-Trp, in which cleavage of the -Tyr-|-Leu- and -Tyr-|-Trp bonds also occurs).. Functionally, cleaves peptides in various proteins in a process that requires ATP hydrolysis. Has a chymotrypsin-like activity. Plays a major role in the degradation of misfolded proteins. Probably partially responsible for degradation of ECF sigma factor SigR prime. This chain is ATP-dependent Clp protease proteolytic subunit 1, found in Streptomyces coelicolor (strain ATCC BAA-471 / A3(2) / M145).